Consider the following 264-residue polypeptide: Transmembrane protein 270 (264 aa).

The next 3 membrane-spanning stretches (helical) occupy residues 31–51, 74–94, and 133–153; these read HLYRFLLLKMAIFQHWVLGLA, LSLALRAGLTLLWVPMWLLLW, and LFLSCLHSLMLVALLLLLLTW. Over residues 227 to 236 the composition is skewed to polar residues; it reads AQEVKSQETS. The segment at 227–264 is disordered; the sequence is AQEVKSQETSGPPPQFLIPESSTTESGPLPPQPETPGE. The span at 254 to 264 shows a compositional bias: pro residues; sequence PLPPQPETPGE.

As to expression, testis.

It is found in the membrane. This chain is Transmembrane protein 270, found in Mus musculus (Mouse).